A 172-amino-acid chain; its full sequence is Small ribosomal subunit protein uS5 (172 aa).

The S5 DRBM domain occupies 17–80 (MREKMIAVNR…EEARRKMIKV (64 aa)).

This sequence belongs to the universal ribosomal protein uS5 family. Part of the 30S ribosomal subunit. Contacts proteins S4 and S8.

Functionally, with S4 and S12 plays an important role in translational accuracy. Located at the back of the 30S subunit body where it stabilizes the conformation of the head with respect to the body. The chain is Small ribosomal subunit protein uS5 from Herminiimonas arsenicoxydans.